Here is a 239-residue protein sequence, read N- to C-terminus: 1-(5-phosphoribosyl)-5-[(5-phosphoribosylamino)methylideneamino] imidazole-4-carboxamide isomerase (239 aa).

The Proton acceptor role is filled by Asp8. The active-site Proton donor is Asp129.

This sequence belongs to the HisA/HisF family.

Its subcellular location is the cytoplasm. The catalysed reaction is 1-(5-phospho-beta-D-ribosyl)-5-[(5-phospho-beta-D-ribosylamino)methylideneamino]imidazole-4-carboxamide = 5-[(5-phospho-1-deoxy-D-ribulos-1-ylimino)methylamino]-1-(5-phospho-beta-D-ribosyl)imidazole-4-carboxamide. It functions in the pathway amino-acid biosynthesis; L-histidine biosynthesis; L-histidine from 5-phospho-alpha-D-ribose 1-diphosphate: step 4/9. In Bacillus cereus (strain ZK / E33L), this protein is 1-(5-phosphoribosyl)-5-[(5-phosphoribosylamino)methylideneamino] imidazole-4-carboxamide isomerase.